The following is an 887-amino-acid chain: Alpha-amylase 3, chloroplastic (887 aa).

Residues 1 to 55 constitute a chloroplast transit peptide; sequence MSTVPIESLLHHSYLRHNSKVNRGNRSFIPISLNLRSHFTSNKLLHSIGKSVGVS. An intrachain disulfide couples C499 to C587. Residues 545–546 and 664–669 each bind substrate; these read YM and RLDFVR. D666 functions as the Nucleophile in the catalytic mechanism. Catalysis depends on E691, which acts as the Proton donor. Residues W693, S695, Q712, K754, 760 to 762, H773, Q779, K857, and W884 contribute to the substrate site; that span reads GWW.

The protein belongs to the glycosyl hydrolase 13 family. Ca(2+) is required as a cofactor. Expressed in developing siliques.

Its subcellular location is the plastid. The protein localises to the chloroplast. The enzyme catalyses Endohydrolysis of (1-&gt;4)-alpha-D-glucosidic linkages in polysaccharides containing three or more (1-&gt;4)-alpha-linked D-glucose units.. Its activity is regulated as follows. Redox-regulated, with the highest activity under reducing conditions. The midpoint redox potential is -329 mV. The disulfide bridge between Cys-499 and Cys-587 inhibits catalysis. Inhibited by CuCl(2) and H(2)O(2). In terms of biological role, possesses endoamylolytic activity in vitro, but seems not required for breakdown of transitory starch in leaves. May be involved in the determination of the final structure of glucans by shortening long linear phospho-oligosaccharides in the chloroplast stroma. Can act on both soluble and insoluble glucan substrates to release small linear and branched malto-oligosaccharides. Works synergistically with beta-amylase toward efficient starch degradation. Has activity against p-nitrophenyl maltoheptaoside (BPNP-G7), amylopectin and beta-limit dextrin. Involved in stress-induced starch degradation. The polypeptide is Alpha-amylase 3, chloroplastic (Arabidopsis thaliana (Mouse-ear cress)).